Here is a 262-residue protein sequence, read N- to C-terminus: MTDQPILMFDSGVGGLTVLREARVLMPDRRFVYVADDAAFPFGAWEEPALRTHILDLFVKLLDRFAPAISVIACNTASTLVIDALRERFPGHPFVGTVPAVKPAAERTRSGLVSVLATPGTVKRQYTRDLISKWAQKCHVRLVGSDRLAGLAEVYMREGFVDEEAVRAEIAPCFMEHEGLRTDIVVLACTHYPFLVNRMRKTAPWPVDWIDPAEAIARRALSLLPPVDGALPQGEPDIAVFTSGKTDFAIGRLMQGFGLSVR.

Residues 10 to 11 and 42 to 43 contribute to the substrate site; these read DS and FG. Cys-74 functions as the Proton donor/acceptor in the catalytic mechanism. 75–76 provides a ligand contact to substrate; it reads NT. The active-site Proton donor/acceptor is the Cys-189. Substrate is bound at residue 190–191; that stretch reads TH.

This sequence belongs to the aspartate/glutamate racemases family.

The catalysed reaction is L-glutamate = D-glutamate. Its pathway is cell wall biogenesis; peptidoglycan biosynthesis. In terms of biological role, provides the (R)-glutamate required for cell wall biosynthesis. The sequence is that of Glutamate racemase from Mesorhizobium japonicum (strain LMG 29417 / CECT 9101 / MAFF 303099) (Mesorhizobium loti (strain MAFF 303099)).